Reading from the N-terminus, the 490-residue chain is MHHCKRYRSPEPDPYLSYRWKRRRSYSREHEGRLRYPSRREPPPRRSRSRSHDRIPYQRRYREHRDSDTYRCEERSPSFGEDCYGSSRSRHRRRSRERGPYRTRKHAHHCHKRRTRSCSSASSRSQQSSKRSSRSVEDDKEGHLVCRIGDWLQERYEIVGNLGEGTFGKVVECLDHARGKSQVALKIIRNVGKYREAARLEINVLKKIKEKDKENKFLCVLMSDWFNFHGHMCIAFELLGKNTFEFLKENNFQPYPLPHVRHMAYQLCHALRFLHENQLTHTDLKPENILFVNSEFETLYNEHKSCEEKSVKNTSIRVADFGSATFDHEHHTTIVATRHYRPPEVILELGWAQPCDVWSIGCILFEYYRGFTLFQTHENREHLVMMEKILGPIPSHMIHRTRKQKYFYKGGLVWDENSSDGRYVKENCKPLKSYMLQDSLEHVQLFDLMRRMLEFDPAQRITLAEALLHPFFAGLTPEERSFHSSRNPSR.

A disordered region spans residues 1-138 (MHHCKRYRSP…SKRSSRSVED (138 aa)). Phosphotyrosine is present on Tyr-7. 6 positions are modified to phosphoserine: Ser-9, Ser-49, Ser-51, Ser-67, Ser-76, and Ser-78. Basic and acidic residues-rich tracts occupy residues 26–56 (YSREHEGRLRYPSRREPPPRRSRSRSHDRIP) and 63–76 (EHRDSDTYRCEERS). The span at 88–116 (RSRHRRRSRERGPYRTRKHAHHCHKRRTR) shows a compositional bias: basic residues. The span at 117-130 (SCSSASSRSQQSSK) shows a compositional bias: low complexity. Ser-135 is subject to Phosphoserine. The region spanning 156–472 (YEIVGNLGEG…LAEALLHPFF (317 aa)) is the Protein kinase domain. Residues 162–170 (LGEGTFGKV) and Lys-186 contribute to the ATP site. Asp-283 serves as the catalytic Proton acceptor.

Belongs to the protein kinase superfamily. CMGC Ser/Thr protein kinase family. Lammer subfamily. In terms of processing, autophosphorylates on all three types of residues.

It localises to the nucleus. It is found in the cytoplasm. The protein localises to the cytoplasmic vesicle. The protein resides in the secretory vesicle. Its subcellular location is the acrosome. It carries out the reaction L-seryl-[protein] + ATP = O-phospho-L-seryl-[protein] + ADP + H(+). The enzyme catalyses L-threonyl-[protein] + ATP = O-phospho-L-threonyl-[protein] + ADP + H(+). It catalyses the reaction L-tyrosyl-[protein] + ATP = O-phospho-L-tyrosyl-[protein] + ADP + H(+). Leucettine L41 inhibits its kinase activity and affects the regulation of alternative splicing mediated by phosphorylation of SR proteins. Functionally, dual specificity kinase acting on both serine/threonine and tyrosine-containing substrates. Phosphorylates serine- and arginine-rich (SR) proteins of the spliceosomal complex. May be a constituent of a network of regulatory mechanisms that enable SR proteins to control RNA splicing and can cause redistribution of SR proteins from speckles to a diffuse nucleoplasmic distribution. Phosphorylates SRSF1 and SRSF3. Regulates the alternative splicing of tissue factor (F3) pre-mRNA in endothelial cells. This chain is Dual specificity protein kinase CLK3 (Clk3), found in Rattus norvegicus (Rat).